The sequence spans 342 residues: N-acetyl-gamma-glutamyl-phosphate reductase (342 aa).

Residue Cys146 is part of the active site.

It belongs to the NAGSA dehydrogenase family. Type 1 subfamily.

Its subcellular location is the cytoplasm. The enzyme catalyses N-acetyl-L-glutamate 5-semialdehyde + phosphate + NADP(+) = N-acetyl-L-glutamyl 5-phosphate + NADPH + H(+). Its pathway is amino-acid biosynthesis; L-arginine biosynthesis; N(2)-acetyl-L-ornithine from L-glutamate: step 3/4. Functionally, catalyzes the NADPH-dependent reduction of N-acetyl-5-glutamyl phosphate to yield N-acetyl-L-glutamate 5-semialdehyde. This chain is N-acetyl-gamma-glutamyl-phosphate reductase, found in Streptomyces avermitilis (strain ATCC 31267 / DSM 46492 / JCM 5070 / NBRC 14893 / NCIMB 12804 / NRRL 8165 / MA-4680).